A 338-amino-acid chain; its full sequence is GTP 3',8-cyclase (338 aa).

The Radical SAM core domain occupies 8 to 227 (KLQRPLKDLR…DMIHQVMPLE (220 aa)). R17 is a binding site for GTP. [4Fe-4S] cluster is bound by residues C24 and C28. Y30 contributes to the S-adenosyl-L-methionine binding site. C31 is a binding site for [4Fe-4S] cluster. R71 lines the GTP pocket. G75 lines the S-adenosyl-L-methionine pocket. A GTP-binding site is contributed by T102. Position 126 (S126) interacts with S-adenosyl-L-methionine. K163 provides a ligand contact to GTP. M197 is a binding site for S-adenosyl-L-methionine. C261 and C264 together coordinate [4Fe-4S] cluster. GTP is bound at residue 266–268 (RAR). C278 lines the [4Fe-4S] cluster pocket.

It belongs to the radical SAM superfamily. MoaA family. As to quaternary structure, monomer and homodimer. Requires [4Fe-4S] cluster as cofactor.

The catalysed reaction is GTP + AH2 + S-adenosyl-L-methionine = (8S)-3',8-cyclo-7,8-dihydroguanosine 5'-triphosphate + 5'-deoxyadenosine + L-methionine + A + H(+). It functions in the pathway cofactor biosynthesis; molybdopterin biosynthesis. Its function is as follows. Catalyzes the cyclization of GTP to (8S)-3',8-cyclo-7,8-dihydroguanosine 5'-triphosphate. The sequence is that of GTP 3',8-cyclase from Bacillus anthracis (strain CDC 684 / NRRL 3495).